A 156-amino-acid chain; its full sequence is MSINATLFVQAIVFAILVWFTMKFVWPPIMKALDERAQKIADGLAAADKAKSELSVANKRVEEELAKSRGESAVRLAEAERRAQALIEEAKAKATEEGSKIIAAAKVEAEQQTVKARETLREQVAALAVKGAEQILRKEVNAGVHADLLGRLKTEL.

Residues 7–27 (LFVQAIVFAILVWFTMKFVWP) form a helical membrane-spanning segment.

It belongs to the ATPase B chain family. As to quaternary structure, F-type ATPases have 2 components, F(1) - the catalytic core - and F(0) - the membrane proton channel. F(1) has five subunits: alpha(3), beta(3), gamma(1), delta(1), epsilon(1). F(0) has three main subunits: a(1), b(2) and c(10-14). The alpha and beta chains form an alternating ring which encloses part of the gamma chain. F(1) is attached to F(0) by a central stalk formed by the gamma and epsilon chains, while a peripheral stalk is formed by the delta and b chains.

The protein resides in the cell inner membrane. F(1)F(0) ATP synthase produces ATP from ADP in the presence of a proton or sodium gradient. F-type ATPases consist of two structural domains, F(1) containing the extramembraneous catalytic core and F(0) containing the membrane proton channel, linked together by a central stalk and a peripheral stalk. During catalysis, ATP synthesis in the catalytic domain of F(1) is coupled via a rotary mechanism of the central stalk subunits to proton translocation. In terms of biological role, component of the F(0) channel, it forms part of the peripheral stalk, linking F(1) to F(0). The protein is ATP synthase subunit b of Polaromonas sp. (strain JS666 / ATCC BAA-500).